The sequence spans 303 residues: uncharacterized protein (303 aa).

A Fe2OG dioxygenase domain is found at 173–300 (KLPELLGQLN…RFTVNGWIRK (128 aa)).

Requires Fe(2+) as cofactor. It depends on L-ascorbate as a cofactor.

This is an uncharacterized protein from Synechocystis sp. (strain ATCC 27184 / PCC 6803 / Kazusa).